Consider the following 283-residue polypeptide: Cyclin-C (283 aa).

One can recognise a Cyclin N-terminal domain in the interval 20–151; that stretch reads DLLKERQKDL…LLELMDCCLI (132 aa). The disordered stretch occupies residues 252–283; it reads TILSKMPKPKPPPNSEGEQGPNGSQNSSYSQS. Residues 272–283 are compositionally biased toward polar residues; sequence PNGSQNSSYSQS. Phosphoserine is present on serine 275.

The protein belongs to the cyclin family. Cyclin C subfamily. As to quaternary structure, component of the Mediator complex, which is composed of MED1, MED4, MED6, MED7, MED8, MED9, MED10, MED11, MED12, MED13, MED13L, MED14, MED15, MED16, MED17, MED18, MED19, MED20, MED21, MED22, MED23, MED24, MED25, MED26, MED27, MED29, MED30, MED31, CCNC, CDK8 and CDC2L6/CDK11. The MED12, MED13, CCNC and CDK8 subunits form a distinct module termed the CDK8 module. Mediator containing the CDK8 module is less active than Mediator lacking this module in supporting transcriptional activation. Individual preparations of the Mediator complex lacking one or more distinct subunits have been variously termed ARC, CRSP, DRIP, PC2, SMCC and TRAP. The cylin/CDK pair formed by CCNC/CDK8 also associates with the large subunit of RNA polymerase II.

The protein resides in the nucleus. Functionally, component of the Mediator complex, a coactivator involved in regulated gene transcription of nearly all RNA polymerase II-dependent genes. Mediator functions as a bridge to convey information from gene-specific regulatory proteins to the basal RNA polymerase II transcription machinery. Mediator is recruited to promoters by direct interactions with regulatory proteins and serves as a scaffold for the assembly of a functional preinitiation complex with RNA polymerase II and the general transcription factors. Binds to and activates cyclin-dependent kinase CDK8 that phosphorylates the CTD (C-terminal domain) of the large subunit of RNA polymerase II (RNAp II), which may inhibit the formation of a transcription initiation complex. The polypeptide is Cyclin-C (Ccnc) (Mus musculus (Mouse)).